The chain runs to 583 residues: Aspartate--tRNA ligase (583 aa).

Glu-174 serves as a coordination point for L-aspartate. The tract at residues 198–201 (QITK) is aspartate. Arg-220 is an L-aspartate binding site. Residues 220 to 222 (RDE) and Gln-229 contribute to the ATP site. His-443 lines the L-aspartate pocket. An ATP-binding site is contributed by Glu-477. Residue Arg-484 coordinates L-aspartate. 529-532 (GLDR) provides a ligand contact to ATP.

This sequence belongs to the class-II aminoacyl-tRNA synthetase family. Type 1 subfamily. As to quaternary structure, homodimer.

Its subcellular location is the cytoplasm. It carries out the reaction tRNA(Asp) + L-aspartate + ATP = L-aspartyl-tRNA(Asp) + AMP + diphosphate. Functionally, catalyzes the attachment of L-aspartate to tRNA(Asp) in a two-step reaction: L-aspartate is first activated by ATP to form Asp-AMP and then transferred to the acceptor end of tRNA(Asp). The polypeptide is Aspartate--tRNA ligase (Streptococcus agalactiae serotype V (strain ATCC BAA-611 / 2603 V/R)).